The chain runs to 333 residues: DNA-directed RNA polymerase subunit alpha (333 aa).

The tract at residues 1–234 (MQISVNEFLT…QQLAAFVDLK (234 aa)) is alpha N-terminal domain (alpha-NTD). The interval 248–333 (IDPILLRPVD…SLKKDDKATA (86 aa)) is alpha C-terminal domain (alpha-CTD).

It belongs to the RNA polymerase alpha chain family. In terms of assembly, homodimer. The RNAP catalytic core consists of 2 alpha, 1 beta, 1 beta' and 1 omega subunit. When a sigma factor is associated with the core the holoenzyme is formed, which can initiate transcription.

The enzyme catalyses RNA(n) + a ribonucleoside 5'-triphosphate = RNA(n+1) + diphosphate. Its function is as follows. DNA-dependent RNA polymerase catalyzes the transcription of DNA into RNA using the four ribonucleoside triphosphates as substrates. The sequence is that of DNA-directed RNA polymerase subunit alpha from Pseudomonas fluorescens (strain ATCC BAA-477 / NRRL B-23932 / Pf-5).